A 520-amino-acid polypeptide reads, in one-letter code: Peptide chain release factor 3 (520 aa).

The tr-type G domain occupies 8 to 277 (ESRKTFAIIS…HAPMPNARQT (270 aa)). GTP-binding positions include 17–24 (SHPDAGKT), 85–89 (DTPGH), and 139–142 (NKLD).

It belongs to the TRAFAC class translation factor GTPase superfamily. Classic translation factor GTPase family. PrfC subfamily.

Its subcellular location is the cytoplasm. Functionally, increases the formation of ribosomal termination complexes and stimulates activities of RF-1 and RF-2. It binds guanine nucleotides and has strong preference for UGA stop codons. It may interact directly with the ribosome. The stimulation of RF-1 and RF-2 is significantly reduced by GTP and GDP, but not by GMP. This chain is Peptide chain release factor 3, found in Staphylococcus haemolyticus (strain JCSC1435).